The following is a 142-amino-acid chain: Midkine (142 aa).

A signal peptide spans 1 to 21 (MELRAFCVILLITFLAVSSQA). 5 cysteine pairs are disulfide-bonded: Cys36-Cys60, Cys44-Cys69, Cys51-Cys73, Cys83-Cys115, and Cys93-Cys125.

The protein belongs to the pleiotrophin family.

Its subcellular location is the secreted. In terms of biological role, secreted protein that functions as a cytokine and growth factor and mediates its signal through cell-surface proteoglycan and non-proteoglycan receptors. Binds cell-surface proteoglycan receptors via their chondroitin sulfate (CS) groups. Thereby regulates many processes like inflammatory response, cell proliferation, cell adhesion, cell growth, cell survival, tissue regeneration, cell differentiation and cell migration. Inhibits mesoderm formation and promotes neural formation during development. Plays a role in development of the neuromuscular junction (NMJ). Has antibacterial activity against both Gram-positive and Gram-negative bacteria. The polypeptide is Midkine (Xenopus tropicalis (Western clawed frog)).